The primary structure comprises 346 residues: Annexin A1 (346 aa).

A2 is modified (N-acetylalanine). Residue S5 is modified to Phosphoserine; by TRPM7. Residue Q19 forms an Isoglutamyl lysine isopeptide (Gln-Lys) (interchain with K-?) linkage. Position 21 is a phosphotyrosine; by EGFR (Y21). S27 carries the post-translational modification Phosphoserine; by PKC. Phosphoserine is present on residues S34 and S37. A Phosphothreonine modification is found at T41. Annexin repeat units follow at residues 42–113 (FNPS…ALLK), 114–185 (TPAQ…SLAK), 197–269 (DLAD…AIVK), and 273–344 (SKPA…ALCG). K58 carries the N6-acetyllysine modification. Residues G59, V60, E62, K97, L100, E105, M127, G129, G131, T132, and E134 each contribute to the Ca(2+) site. A Phosphothreonine modification is found at T136. D171, G210, and R213 together coordinate Ca(2+). K214 is covalently cross-linked (Glycyl lysine isopeptide (Lys-Gly) (interchain with G-Cter in SUMO1); alternate). K214 participates in a covalent cross-link: Glycyl lysine isopeptide (Lys-Gly) (interchain with G-Cter in SUMO2); alternate. G215 contacts Ca(2+). K239 carries the N6-acetyllysine modification. Ca(2+)-binding residues include D253, E255, and L256. A Glycyl lysine isopeptide (Lys-Gly) (interchain with G-Cter in SUMO1) cross-link involves residue K257. Ca(2+)-binding residues include E261, M286, G288, and G290. Position 312 is an N6-acetyllysine (K312). C324 and C343 are oxidised to a cystine. Ca(2+)-binding residues include L328, E330, and T331. K332 is covalently cross-linked (Glycyl lysine isopeptide (Lys-Gly) (interchain with G-Cter in SUMO1)). E336 provides a ligand contact to Ca(2+).

This sequence belongs to the annexin family. In terms of assembly, homodimer; non-covalently linked. Homodimer; linked by transglutamylation. Homodimers linked by transglutamylation are observed in placenta, but not in other tissues. Interacts with S100A11. Heterotetramer, formed by two molecules each of S100A11 and ANXA1. Interacts with DYSF. Interacts with EGFR. Phosphorylated by protein kinase C, EGFR and TRPM7. Phosphorylated in response to EGF treatment. In terms of processing, sumoylated. Post-translationally, proteolytically cleaved by cathepsin CTSG to release the active N-terminal peptide Ac2-26.

It localises to the nucleus. Its subcellular location is the cytoplasm. The protein localises to the cell projection. It is found in the cilium. The protein resides in the basolateral cell membrane. It localises to the lateral cell membrane. Its subcellular location is the cell membrane. The protein localises to the apical cell membrane. It is found in the membrane. The protein resides in the early endosome. It localises to the cytoplasmic vesicle membrane. Its subcellular location is the endosome membrane. The protein localises to the secreted. It is found in the extracellular space. The protein resides in the extracellular exosome. It localises to the cytoplasmic vesicle. Its subcellular location is the secretory vesicle lumen. The protein localises to the phagocytic cup. Plays important roles in the innate immune response as effector of glucocorticoid-mediated responses and regulator of the inflammatory process. Has anti-inflammatory activity. Plays a role in glucocorticoid-mediated down-regulation of the early phase of the inflammatory response. Contributes to the adaptive immune response by enhancing signaling cascades that are triggered by T-cell activation, regulates differentiation and proliferation of activated T-cells. Promotes the differentiation of T-cells into Th1 cells and negatively regulates differentiation into Th2 cells. Has no effect on unstimulated T-cells. Negatively regulates hormone exocytosis via activation of the formyl peptide receptors and reorganization of the actin cytoskeleton. Has high affinity for Ca(2+) and can bind up to eight Ca(2+) ions. Displays Ca(2+)-dependent binding to phospholipid membranes. Plays a role in the formation of phagocytic cups and phagosomes. Plays a role in phagocytosis by mediating the Ca(2+)-dependent interaction between phagosomes and the actin cytoskeleton. Its function is as follows. Functions at least in part by activating the formyl peptide receptors and downstream signaling cascades. Promotes chemotaxis of granulocytes and monocytes via activation of the formyl peptide receptors. Promotes rearrangement of the actin cytoskeleton, cell polarization and cell migration. Promotes resolution of inflammation and wound healing. Acts via neutrophil N-formyl peptide receptors to enhance the release of CXCL2. In Pan troglodytes (Chimpanzee), this protein is Annexin A1 (ANXA1).